The chain runs to 278 residues: MASGKHHQPGGTRSLTMQKVSLRVTPRLVLEVNRHNAICVATNVPEFYNARGDLNVRDLRAHVKARMISSQFCGYILVSLLDSEDQVDHLNIFPHVFSERMILYKPNNVNLMEMCALLSMIENAKSPSIGLCREVLGRLTLLHSKCNNLDSLFLYNGARTLLSTLVKYHDLEEGAATPGPWNEGLSLFKLHKELKRAPSEARDLMQSLFLTSGKMGCLARSPKDYCADLNKEEDANSGFTFNLFYQDSLLTKHFQCQTVLQTLRRKCLGSDTVSKIIP.

The protein belongs to the herpesviridae cytoplasmic envelopment protein 1 family. In terms of assembly, interacts with BSRF1 tegument protein; the BBRF2-BSRF1 complexes oligomerize and might play a role in tethering the viral nucleocapsids to the host Golgi membrane during secondary envelopment.

It is found in the virion. It localises to the virion tegument. Its subcellular location is the host cytoplasm. The protein resides in the host Golgi apparatus. In terms of biological role, plays a critical role in cytoplasmic virus egress. Participates in the final step of tegumentation and envelope acquisition within the host cytoplasm. The chain is Cytoplasmic envelopment protein 1 from Homo sapiens (Human).